Consider the following 537-residue polypeptide: Cytoplasmic 60S subunit biogenesis factor REI1 homolog (537 aa).

2 C2H2-type zinc fingers span residues 18-42 (YTCN…SDWH) and 83-107 (KTCE…STKH). Disordered stretches follow at residues 101–151 (HLSS…AEEE) and 163–204 (SIHD…PEAL). Low complexity predominate over residues 192-204 (EETPTTTPKPEAL). The C2H2-type 3 zinc-finger motif lies at 260–284 (NECLTCGKMKVNVFAIQTHMRDKSH). Residues 312–322 (DWETEEEDKGE) are compositionally biased toward acidic residues. 2 disordered regions span residues 312–361 (DWET…ASSL) and 382–401 (GKHP…ADGI). Basic and acidic residues predominate over residues 323–339 (EDGGVRLGAKRESKVVD). A compositionally biased stretch (acidic residues) spans 340–356 (ENGDEVMEDEEGWETDS). Basic residues predominate over residues 383-395 (KHPHHSRENKKAH).

This sequence belongs to the REI1 family. As to quaternary structure, associates with nascent pre-60S particles that have not yet entered the translating pool, and is released from mature 60S subunits.

The protein localises to the cytoplasm. In terms of biological role, pre-60S-associated factor involved in the cytoplasmic maturation of the 60S subunit. Involved in the dissociation and recycling of other late pre-60S factors before newly synthesized large ribosomal subunits enter translation. This chain is Cytoplasmic 60S subunit biogenesis factor REI1 homolog, found in Chaetomium thermophilum (strain DSM 1495 / CBS 144.50 / IMI 039719) (Thermochaetoides thermophila).